The following is a 372-amino-acid chain: Glutamate 5-kinase (372 aa).

ATP is bound at residue Lys14. Substrate contacts are provided by Ser54, Asp141, and Asn153. 173–174 provides a ligand contact to ATP; it reads TD. The 79-residue stretch at 280 to 358 folds into the PUA domain; that stretch reads RGRVVIDGGA…SEIESVLGHL (79 aa).

Belongs to the glutamate 5-kinase family.

It is found in the cytoplasm. The catalysed reaction is L-glutamate + ATP = L-glutamyl 5-phosphate + ADP. The protein operates within amino-acid biosynthesis; L-proline biosynthesis; L-glutamate 5-semialdehyde from L-glutamate: step 1/2. Catalyzes the transfer of a phosphate group to glutamate to form L-glutamate 5-phosphate. The polypeptide is Glutamate 5-kinase (Cupriavidus taiwanensis (strain DSM 17343 / BCRC 17206 / CCUG 44338 / CIP 107171 / LMG 19424 / R1) (Ralstonia taiwanensis (strain LMG 19424))).